Reading from the N-terminus, the 188-residue chain is Pro-adrenomedullin (188 aa).

The signal sequence occupies residues 1–21 (MKLVPVALLYLGSLAFLGVDT). Position 41 is an arginine amide (arginine 41). A propeptide spanning residues 45–92 (ELRESSSYPTGLADVKAGPVQTLIRPQDVKGASRSPQASSPDAARIRV) is cleaved from the precursor. The disordered stretch occupies residues 69–89 (RPQDVKGASRSPQASSPDAAR). Cysteine 110 and cysteine 115 are joined by a disulfide. Residues 129-175 (DKDKDGSAPRSKISPQGYGRRRRRSLPEAGLGRTLLQPPEPKLRGAP) are disordered. Tyrosine 146 is subject to Tyrosine amide. Positions 153–188 (SLPEAGLGRTLLQPPEPKLRGAPDSRVHQVLATLRI) are cleaved as a propeptide — preproAM C-terminal fragment.

Belongs to the adrenomedullin family.

The protein localises to the secreted. Its function is as follows. Adrenomedullin/ADM and proadrenomedullin N-20 terminal peptide/PAMP are peptide hormones that act as potent hypotensive and vasodilatator agents. Numerous actions have been reported most related to the physiologic control of fluid and electrolyte homeostasis. Functionally, ADM function is mediated by the CALCRL-RAMP2 and CALCRL-RAMP3 receptor complexes with ADM showing the highest potency for the CALCRL-RAMP2 complex. The protein is Pro-adrenomedullin (ADM) of Bos taurus (Bovine).